An 811-amino-acid chain; its full sequence is Mitochondrial intermediate peptidase (811 aa).

A mitochondrion-targeting transit peptide spans 1–25 (MRSGSRLSNYLVRLSGRVSFTQKRS). The segment at 423–450 (TENGEKASTDTSTSTTTSTTTTDSTTTT) is disordered. A compositionally biased stretch (low complexity) spans 431–450 (TDTSTSTTTSTTTTDSTTTT). A Zn(2+)-binding site is contributed by His593. Glu594 is a catalytic residue. Zn(2+)-binding residues include His597 and His600.

The protein belongs to the peptidase M3 family. The cofactor is Zn(2+).

The protein resides in the mitochondrion matrix. It catalyses the reaction Release of an N-terminal octapeptide as second stage of processing of some proteins imported into the mitochondrion.. Cleaves proteins, imported into the mitochondrion, to their mature size. While most mitochondrial precursor proteins are processed to the mature form in one step by mitochondrial processing peptidase (MPP), the sequential cleavage by MIP of an octapeptide after initial processing by MPP is a required step for a subgroup of nuclear-encoded precursor proteins destined for the matrix or the inner membrane. The protein is Mitochondrial intermediate peptidase (OCT1) of Lodderomyces elongisporus (strain ATCC 11503 / CBS 2605 / JCM 1781 / NBRC 1676 / NRRL YB-4239) (Yeast).